The primary structure comprises 186 residues: dCTP deaminase (186 aa).

107–112 (KSSYAR) contributes to the dCTP binding site. Catalysis depends on Glu133, which acts as the Proton donor/acceptor. DCTP is bound by residues Gln152, Tyr166, and Gln176.

This sequence belongs to the dCTP deaminase family. Homotrimer.

It carries out the reaction dCTP + H2O + H(+) = dUTP + NH4(+). It participates in pyrimidine metabolism; dUMP biosynthesis; dUMP from dCTP (dUTP route): step 1/2. In terms of biological role, catalyzes the deamination of dCTP to dUTP. This Chloroflexus aurantiacus (strain ATCC 29366 / DSM 635 / J-10-fl) protein is dCTP deaminase.